A 402-amino-acid chain; its full sequence is Probable 2,3-bisphosphoglycerate-independent phosphoglycerate mutase (402 aa).

Belongs to the BPG-independent phosphoglycerate mutase family. A-PGAM subfamily.

The catalysed reaction is (2R)-2-phosphoglycerate = (2R)-3-phosphoglycerate. It participates in carbohydrate degradation; glycolysis; pyruvate from D-glyceraldehyde 3-phosphate: step 3/5. In terms of biological role, catalyzes the interconversion of 2-phosphoglycerate and 3-phosphoglycerate. This Thermosipho africanus (strain TCF52B) protein is Probable 2,3-bisphosphoglycerate-independent phosphoglycerate mutase.